The chain runs to 59 residues: MGRLGLTEILVIVGIVILLFGGKKIPELMKGLGSGIKEFKNAAKDDQPAPAKKQEEEQK.

The helical transmembrane segment at 1 to 21 (MGRLGLTEILVIVGIVILLFG) threads the bilayer.

The protein belongs to the TatA/E family. In terms of assembly, forms a complex with TatC.

It is found in the cell inner membrane. Part of the twin-arginine translocation (Tat) system that transports large folded proteins containing a characteristic twin-arginine motif in their signal peptide across membranes. TatA could form the protein-conducting channel of the Tat system. The chain is Sec-independent protein translocase protein TatA from Flavobacterium johnsoniae (strain ATCC 17061 / DSM 2064 / JCM 8514 / BCRC 14874 / CCUG 350202 / NBRC 14942 / NCIMB 11054 / UW101) (Cytophaga johnsonae).